The following is a 252-amino-acid chain: MQIFHNLNEWIRFRNTLSPDLSLGFAPTMGNLHAGHASLFLASSKENHYTVSSLFVNPTQFNNPDDYKHYPRTVDADLELMTQNGVDFCILPNENEIYTDGYAYQVQENRLGQLMEGKHRPGHFNGVLTIVMKLFNLVKPTRAYFGEKDYQQLLLIQGMVKALFMDIEIKSCPTVREKSGLACSSRNNRLTPSQREIADEFAKIFHQNKSSAMISKELEALGITVEYIEEFQGRRFAAVKIGDIRLIDNYLL.

Position 29 to 36 (29 to 36) interacts with ATP; the sequence is MGNLHAGH. The Proton donor role is filled by histidine 36. Glutamine 60 contacts (R)-pantoate. Glutamine 60 contributes to the beta-alanine binding site. ATP is bound at residue 146–149; the sequence is GEKD. Glutamine 152 serves as a coordination point for (R)-pantoate. Residues valine 175 and 183-186 each bind ATP; that span reads CSSR.

Belongs to the pantothenate synthetase family. Homodimer.

The protein resides in the cytoplasm. It carries out the reaction (R)-pantoate + beta-alanine + ATP = (R)-pantothenate + AMP + diphosphate + H(+). Its pathway is cofactor biosynthesis; (R)-pantothenate biosynthesis; (R)-pantothenate from (R)-pantoate and beta-alanine: step 1/1. Catalyzes the condensation of pantoate with beta-alanine in an ATP-dependent reaction via a pantoyl-adenylate intermediate. The chain is Pantothenate synthetase from Legionella pneumophila (strain Corby).